A 523-amino-acid polypeptide reads, in one-letter code: Probable malate:quinone oxidoreductase (523 aa).

It belongs to the MQO family. The cofactor is FAD.

It catalyses the reaction (S)-malate + a quinone = a quinol + oxaloacetate. It functions in the pathway carbohydrate metabolism; tricarboxylic acid cycle; oxaloacetate from (S)-malate (quinone route): step 1/1. The sequence is that of Probable malate:quinone oxidoreductase from Agrobacterium fabrum (strain C58 / ATCC 33970) (Agrobacterium tumefaciens (strain C58)).